A 124-amino-acid chain; its full sequence is Large ribosomal subunit protein uL22 (124 aa).

The protein belongs to the universal ribosomal protein uL22 family. In terms of assembly, part of the 50S ribosomal subunit.

This protein binds specifically to 23S rRNA; its binding is stimulated by other ribosomal proteins, e.g. L4, L17, and L20. It is important during the early stages of 50S assembly. It makes multiple contacts with different domains of the 23S rRNA in the assembled 50S subunit and ribosome. Its function is as follows. The globular domain of the protein is located near the polypeptide exit tunnel on the outside of the subunit, while an extended beta-hairpin is found that lines the wall of the exit tunnel in the center of the 70S ribosome. In Macrococcus caseolyticus (strain JCSC5402) (Macrococcoides caseolyticum), this protein is Large ribosomal subunit protein uL22.